We begin with the raw amino-acid sequence, 500 residues long: MPVQTAVVVLAAGAGTRMRSKTPKVLHTLGGRTMLAHSLYAAAEVDPTHLVTVVGHDKERVGVAVSALEAELGRPIAIAVQDEQNGTGHAVECGLSALPADFRGTVLVTAADVPLLDGRTLHALVDEHHSEPTPSAVTVLTFTAPEPRGYGRIVRLPHDGEIAEIVEEADATEEQAAITEVNAGVYAFDAEFLRSALGQLNANNAQGELYLTDVVKIAREAGAPVFAAHLADSAKVAGANDRVQLSRLAAELNRRTVENWMRAGVTVVDPSTTWIDVGVTLARDVTIHPGVQLLGTTAVGEDAVIGPDTTLTDVTVGEGASVVRTHGSESTIGAGATVGPFSYLRPGTVLGASGKLGAFVETKNADIGAHTKVPHLTYVGDATIGEYSNIGASSVFVNYDGVAKSRTVVGSHVRTGSDTMFVAPVQVGDGAYTGAGTVLRFDVPPGALAVSGGKQRNIDGWVQRNRPGTAAAEAAAAAGLHHSSDLHETEKQDLKDGIEQ.

A pyrophosphorylase region spans residues 1–242 (MPVQTAVVVL…SAKVAGANDR (242 aa)). UDP-N-acetyl-alpha-D-glucosamine is bound by residues 10-13 (LAAG), Lys-24, Gln-81, and 86-87 (GT). Residue Asp-112 coordinates Mg(2+). UDP-N-acetyl-alpha-D-glucosamine contacts are provided by Gly-151, Glu-167, Asn-182, and Asn-240. Residue Asn-240 participates in Mg(2+) binding. Positions 243–263 (VQLSRLAAELNRRTVENWMRA) are linker. Residues 264 to 500 (GVTVVDPSTT…KQDLKDGIEQ (237 aa)) are N-acetyltransferase. The UDP-N-acetyl-alpha-D-glucosamine site is built by Arg-345 and Lys-363. The active-site Proton acceptor is His-375. UDP-N-acetyl-alpha-D-glucosamine-binding residues include Tyr-378 and Asn-389. Acetyl-CoA is bound by residues Ala-392, 398-399 (NY), Ser-417, and Ala-435. Residues 472-500 (AEAAAAAGLHHSSDLHETEKQDLKDGIEQ) are disordered. Over residues 482–500 (HSSDLHETEKQDLKDGIEQ) the composition is skewed to basic and acidic residues.

In the N-terminal section; belongs to the N-acetylglucosamine-1-phosphate uridyltransferase family. The protein in the C-terminal section; belongs to the transferase hexapeptide repeat family. In terms of assembly, homotrimer. The cofactor is Mg(2+).

The protein resides in the cytoplasm. It catalyses the reaction alpha-D-glucosamine 1-phosphate + acetyl-CoA = N-acetyl-alpha-D-glucosamine 1-phosphate + CoA + H(+). The catalysed reaction is N-acetyl-alpha-D-glucosamine 1-phosphate + UTP + H(+) = UDP-N-acetyl-alpha-D-glucosamine + diphosphate. It participates in nucleotide-sugar biosynthesis; UDP-N-acetyl-alpha-D-glucosamine biosynthesis; N-acetyl-alpha-D-glucosamine 1-phosphate from alpha-D-glucosamine 6-phosphate (route II): step 2/2. It functions in the pathway nucleotide-sugar biosynthesis; UDP-N-acetyl-alpha-D-glucosamine biosynthesis; UDP-N-acetyl-alpha-D-glucosamine from N-acetyl-alpha-D-glucosamine 1-phosphate: step 1/1. Its pathway is bacterial outer membrane biogenesis; LPS lipid A biosynthesis. In terms of biological role, catalyzes the last two sequential reactions in the de novo biosynthetic pathway for UDP-N-acetylglucosamine (UDP-GlcNAc). The C-terminal domain catalyzes the transfer of acetyl group from acetyl coenzyme A to glucosamine-1-phosphate (GlcN-1-P) to produce N-acetylglucosamine-1-phosphate (GlcNAc-1-P), which is converted into UDP-GlcNAc by the transfer of uridine 5-monophosphate (from uridine 5-triphosphate), a reaction catalyzed by the N-terminal domain. The sequence is that of Bifunctional protein GlmU from Rhodococcus jostii (strain RHA1).